Here is a 317-residue protein sequence, read N- to C-terminus: Melanocyte-stimulating hormone receptor (317 aa).

Over residues 1–20 the composition is skewed to polar residues; sequence MPVQGSQRSLLGAVNSTPTA. Residues 1–23 form a disordered region; it reads MPVQGSQRSLLGAVNSTPTATPH. At 1 to 37 the chain is on the extracellular side; the sequence is MPVQGSQRSLLGAVNSTPTATPHLRPAANQTGPQCLE. Asn29 carries N-linked (GlcNAc...) asparagine glycosylation. The chain crosses the membrane as a helical span at residues 38–63; sequence VSIPDGLFLCLGLVSLVENTLVVAAI. The Cytoplasmic segment spans residues 64–72; that stretch reads AKNRNLHSP. A helical membrane pass occupies residues 73–93; that stretch reads MYCFICCLALSDLLVSVSSVL. At 94-118 the chain is on the extracellular side; it reads ETAVLLLLGAGALAAQATVVQQLGN. Residues 119 to 140 form a helical membrane-spanning segment; sequence VIDVLLCSSMVSSLFFLGAIAM. Over 141 to 163 the chain is Cytoplasmic; it reads DRYISIFYALRYHSIVTLARARR. The helical transmembrane segment at 164–183 threads the bilayer; the sequence is AIAAIWAASILSSTLFIAYC. The Extracellular segment spans residues 184-191; that stretch reads DRTAALLC. Residues 192–211 traverse the membrane as a helical segment; the sequence is LVVFFLAMLVLMAVLYVHML. Residues 212–240 are Cytoplasmic-facing; sequence TQARQHAQGIARLHKRQRPVQQGWGLKGA. A helical membrane pass occupies residues 241–266; sequence ATLTILLGVFFLCWGPFFLHLTLIAV. The Extracellular portion of the chain corresponds to 267–279; sequence CPQHPTCSCIFKN. The chain crosses the membrane as a helical span at residues 280-300; that stretch reads FRLFLALIVCNAIVDPLIYAF. Residues 301 to 317 lie on the Cytoplasmic side of the membrane; it reads RSQELRKTLKEVLLFFW.

Belongs to the G-protein coupled receptor 1 family. Interacts with MGRN1, but does not undergo MGRN1-mediated ubiquitination; this interaction competes with GNAS-binding and thus inhibits agonist-induced cAMP production. Interacts with OPN3; the interaction results in a decrease in MC1R-mediated cAMP signaling and ultimately a decrease in melanin production in melanocytes.

It localises to the cell membrane. In terms of biological role, receptor for MSH (alpha, beta and gamma) and ACTH. The activity of this receptor is mediated by G proteins which activate adenylate cyclase. Mediates melanogenesis, the production of eumelanin (black/brown) and phaeomelanin (red/yellow), via regulation of cAMP signaling in melanocytes. This is Melanocyte-stimulating hormone receptor (MC1R) from Lemur catta (Ring-tailed lemur).